The following is a 257-amino-acid chain: UPF0246 protein RSc2009 (257 aa).

This sequence belongs to the UPF0246 family.

The chain is UPF0246 protein RSc2009 from Ralstonia nicotianae (strain ATCC BAA-1114 / GMI1000) (Ralstonia solanacearum).